The following is a 184-amino-acid chain: Photosystem I assembly protein Ycf4 (184 aa).

2 helical membrane passes run 22–42 (FFWA…GTSS) and 57–77 (ILFF…LFIS).

This sequence belongs to the Ycf4 family.

The protein localises to the plastid. It localises to the chloroplast thylakoid membrane. In terms of biological role, seems to be required for the assembly of the photosystem I complex. In Nandina domestica (Heavenly bamboo), this protein is Photosystem I assembly protein Ycf4.